The primary structure comprises 249 residues: Low affinity immunoglobulin gamma Fc region receptor III-A (249 aa).

An N-terminal signal peptide occupies residues 1–20 (MWQLLLPTALVLTAFSGIQA). Topologically, residues 21–203 (GLQKAVVNLD…SPSMFPPWHQ (183 aa)) are extracellular. Ig-like C2-type domains follow at residues 22-102 (LQKA…VQLE) and 119-188 (EGDP…FRIS). 2 cysteine pairs are disulfide-bonded: Cys-46–Cys-88 and Cys-127–Cys-171. N-linked (GlcNAc...) asparagine glycosylation is found at Asn-62, Asn-164, and Asn-179. Residues 204 to 224 (ITFCLLIGLLFAIDTVLYFSV) form a helical membrane-spanning segment. The Cytoplasmic segment spans residues 225–249 (RRGLQSPVADYEEPKIQWSKEPQDK). Tyr-235 carries the post-translational modification Phosphotyrosine.

Forms a heterooligomeric complex with ITAM-containing signaling subunits FCER1G. Interacts (via transmembrane domain) with signaling subunits; this interaction is a prerequisite for receptor complex expression on the cell surface and intracellular signal transduction. Binds the Fc region of antigen-complexed IgG. In terms of processing, N-glycosylated. Phosphorylated following receptor ligation. In terms of tissue distribution, detected on myeloid cells, peripheral blood monocytes, splenic and bone marrow dendritic cells, and thioglycollate-elicited macrophages and neutrophils but absent from lymphoid populations with no expression observed on T cells, B cells, NK cells or other granulocytes (at protein level). Expressed in peripheral blood leukocytes, spleen, liver, thymus and small intestine. Expressed in splenic dendritic cell subsets (at protein level).

It localises to the cell membrane. In terms of biological role, receptor for the invariable Fc fragment of immunoglobulin gamma (IgG). Binds with intermediate affinity to both IgG2a and IgG2b. Can bind to IgG2a and IgG2b monomers. Does not display binding to IgG1 or IgG3. Recognizes neutralizing virus-specific IgGs displayed on the cell surface of infected cells and triggers antibody-dependent cellular cytotoxicity (ADCC). Confers protection to lethal influenza virus infection. On splenic dendritic cells, uptakes antigen immune complexes and efficiently divert them into MHC class I and II antigen presentation pathways to provide for superior priming of CD4-positive and CD8-positive T cell immune responses. Mediates neutrophil activation by IgG complexes redundantly with FCGR2A. Plays a role in promoting bone resorption by enhancing osteoclast differentiation following binding to IgG2a. Also acts as a receptor for the Fc region of immunoglobulin epsilon (IgE). Binds with low affinity to both the a and b allotypes of IgE. Has also been shown to bind to IgE allotype a only but not to allotype b. Binds aggregated IgE but not the monomeric form and bound monomeric IgG is readily displaced by IgE complexes. Binding to IgE promotes macrophage-mediated phagocytosis, antigen presentation to T cells, production of pro-inflammatory cytokines and the late phase of cutaneous allergic reactions. Mediates enhanced ADCC in response to afucosylated IgGs. This chain is Low affinity immunoglobulin gamma Fc region receptor III-A, found in Mus musculus (Mouse).